Consider the following 703-residue polypeptide: DNA ligase (703 aa).

A disordered region spans residues 1-20 (MNDNLDLFSGAAPAAPESGA). The span at 9–20 (SGAAPAAPESGA) shows a compositional bias: low complexity. Residues 53 to 57 (DGEYD), 102 to 103 (SI), and Glu139 each bind NAD(+). The active-site N6-AMP-lysine intermediate is the Lys141. The NAD(+) site is built by Arg162, Glu200, Lys321, and Lys345. The Zn(2+) site is built by Cys439, Cys442, Cys457, and Cys463. Residues 622 to 703 (QTAQPLAGMT…MLALLAGGDR (82 aa)) form the BRCT domain.

It belongs to the NAD-dependent DNA ligase family. LigA subfamily. The cofactor is Mg(2+). It depends on Mn(2+) as a cofactor.

It catalyses the reaction NAD(+) + (deoxyribonucleotide)n-3'-hydroxyl + 5'-phospho-(deoxyribonucleotide)m = (deoxyribonucleotide)n+m + AMP + beta-nicotinamide D-nucleotide.. Its function is as follows. DNA ligase that catalyzes the formation of phosphodiester linkages between 5'-phosphoryl and 3'-hydroxyl groups in double-stranded DNA using NAD as a coenzyme and as the energy source for the reaction. It is essential for DNA replication and repair of damaged DNA. The protein is DNA ligase of Delftia acidovorans (strain DSM 14801 / SPH-1).